The primary structure comprises 284 residues: Putative xyloglucan endotransglucosylase/hydrolase protein 13 (284 aa).

Positions 1–24 (MAAFTTKQSLLLLSLLLLISLSAG) are cleaved as a signal peptide. A GH16 domain is found at 25–214 (SFYDNFDITW…WTNAPFSASY (190 aa)). The active-site Nucleophile is Glu-100. Glu-104 (proton donor) is an active-site residue. A xyloglucan-binding site is contributed by Glu-104. Asn-108 carries N-linked (GlcNAc...) asparagine glycosylation. Xyloglucan contacts are provided by residues 117–119 (HTN), 127–129 (NRE), 193–194 (DW), and Gly-198. Disulfide bonds link Cys-223–Cys-234 and Cys-267–Cys-281. Arg-272 contributes to the xyloglucan binding site.

This sequence belongs to the glycosyl hydrolase 16 family. XTH group 2 subfamily. Contains at least one intrachain disulfide bond essential for its enzymatic activity.

Its subcellular location is the secreted. It localises to the cell wall. The protein resides in the extracellular space. The protein localises to the apoplast. It carries out the reaction breaks a beta-(1-&gt;4) bond in the backbone of a xyloglucan and transfers the xyloglucanyl segment on to O-4 of the non-reducing terminal glucose residue of an acceptor, which can be a xyloglucan or an oligosaccharide of xyloglucan.. In terms of biological role, may catalyze xyloglucan endohydrolysis (XEH) and/or endotransglycosylation (XET). Cleaves and religates xyloglucan polymers, an essential constituent of the primary cell wall, and thereby participates in cell wall construction of growing tissues. This Arabidopsis thaliana (Mouse-ear cress) protein is Putative xyloglucan endotransglucosylase/hydrolase protein 13 (XTH13).